The chain runs to 529 residues: Aldehyde dehydrogenase 1 (529 aa).

251-256 (GSTYVG) contacts NAD(+). Residues glutamate 273 and cysteine 307 contribute to the active site.

Belongs to the aldehyde dehydrogenase family.

It carries out the reaction an aldehyde + NAD(+) + H2O = a carboxylate + NADH + 2 H(+). The chain is Aldehyde dehydrogenase 1 from Entamoeba histolytica (strain ATCC 30459 / HM-1:IMSS / ABRM).